The primary structure comprises 599 residues: Capsular polysaccharide biosynthesis protein CapD (599 aa).

4 consecutive transmembrane segments (helical) span residues 12–32 (ILII…YAIL), 41–61 (IDLL…FAYV), 79–99 (SVLK…SLLI), and 102–122 (SPFL…IGGS).

It belongs to the polysaccharide synthase family.

The protein resides in the cell membrane. The protein operates within capsule biogenesis; capsule polysaccharide biosynthesis. In terms of biological role, required for the biosynthesis of type 1 capsular polysaccharide. In Staphylococcus aureus, this protein is Capsular polysaccharide biosynthesis protein CapD (capD).